Reading from the N-terminus, the 524-residue chain is Metalloendopeptidase OMA1, mitochondrial (524 aa).

The transit peptide at methionine 1–asparagine 13 directs the protein to the mitochondrion. Residues histidine 14–glutamine 143 constitute a propeptide that is removed on maturation. Over alanine 144–leucine 195 the chain is Mitochondrial matrix. The interval proline 148 to arginine 167 is cardiolipin-binding. The segment at valine 165–leucine 195 is stress-sensor region. A helical transmembrane segment spans residues phenylalanine 196–valine 216. A Zn(2+)-binding site is contributed by histidine 327. The active site involves glutamate 328. Zn(2+) contacts are provided by histidine 331 and glutamate 392. Cysteine 407 and cysteine 465 are oxidised to a cystine.

It belongs to the peptidase M48 family. In terms of assembly, homooligomer. The cofactor is Zn(2+). May form a redox-dependent disulfide bond. Exists in a semi-oxidized state and is activated by prolonged hypoxia. In terms of processing, autocatalytically cleaved in response to mitochondrial depolarization both at the N-terminus and C-terminus to generate the short active form (S-OMA1). Autocatalytic processing at the C-terminus takes place at residues 447-456. The S-OMA1 form is unstable. OMA1 pre-processing by AFG3L2 may participate in maturation before OMA1 autocatalytic cleavage. Degraded by YMEL1 in response to membrane depolarization. Protein turnover is regulated by prohibitin (PHB and PHB2), which promotes degradation of OMA1 in a cardiolipin-binding manner. Widely expressed, with strong expression in the heart, skeletal muscle, kidney and liver.

It localises to the mitochondrion inner membrane. Its activity is regulated as follows. Protease activity is activated upon autocatalytic cleavage in response to mitochondrial depolarization. Its function is as follows. Metalloprotease that is part of the quality control system in the inner membrane of mitochondria. Activated in response to various mitochondrial stress, leading to the proteolytic cleavage of target proteins, such as OPA1, UQCC3 and DELE1. Involved in the fusion of the mitochondrial inner membranes by mediating cleavage of OPA1 at S1 position, generating the soluble OPA1 (S-OPA1), which cooperates with the membrane form (L-OPA1) to coordinate the fusion of mitochondrial inner membranes. Following stress conditions that induce loss of mitochondrial membrane potential, mediates cleavage of OPA1, leading to excess production of soluble OPA1 (S-OPA1) and negative regulation of mitochondrial fusion. Involved in mitochondrial safeguard in response to transient mitochondrial membrane depolarization (flickering) by catalyzing cleavage of OPA1, leading to excess production of S-OPA1, preventing mitochondrial hyperfusion. Also acts as a regulator of apoptosis: upon BAK and BAX aggregation, mediates cleavage of OPA1, leading to the remodeling of mitochondrial cristae and allowing the release of cytochrome c from mitochondrial cristae. In depolarized mitochondria, may also act as a backup protease for PINK1 by mediating PINK1 cleavage and promoting its subsequent degradation by the proteasome. May also cleave UQCC3 in response to mitochondrial depolarization. Also acts as an activator of the integrated stress response (ISR): in response to mitochondrial stress, mediates cleavage of DELE1 to generate the processed form of DELE1 (S-DELE1), which translocates to the cytosol and activates EIF2AK1/HRI to trigger the ISR. Its role in mitochondrial quality control is essential for regulating lipid metabolism as well as to maintain body temperature and energy expenditure under cold-stress conditions. Binds cardiolipin, possibly regulating its protein turnover. Required for the stability of the respiratory supercomplexes. The protein is Metalloendopeptidase OMA1, mitochondrial of Homo sapiens (Human).